Reading from the N-terminus, the 513-residue chain is Activin receptor type-2A (513 aa).

An N-terminal signal peptide occupies residues 1 to 19; the sequence is MGAAAKLAFAVFLISCSSG. Topologically, residues 20 to 135 are extracellular; that stretch reads AILGRSETQE…TSNPVTPKPP (116 aa). Cystine bridges form between Cys30–Cys60, Cys50–Cys78, Cys85–Cys104, Cys91–Cys103, and Cys105–Cys110. 2 N-linked (GlcNAc...) asparagine glycosylation sites follow: Asn43 and Asn66. The helical transmembrane segment at 136 to 161 threads the bilayer; it reads YYNILLYSLVPLMLIAGIVICAFWVY. Residues 162 to 513 are Cytoplasmic-facing; the sequence is RHHMMAYPPV…VDFPPKESSL (352 aa). The Protein kinase domain occupies 192–485; it reads LQLLEVKARG…GERITQMQRL (294 aa). ATP contacts are provided by residues 198–206 and Lys219; that span reads KARGRFGCV. The Proton acceptor role is filled by Asp322.

This sequence belongs to the protein kinase superfamily. TKL Ser/Thr protein kinase family. TGFB receptor subfamily. Part of a complex consisting of MAGI2/ARIP1, ACVR2A, ACVR1B and SMAD3. Interacts with MAGI2/ARIP1. Interacts with type I receptor ACVR1. Interacts with BMP7. Interacts with TSC22D1/TSC-22. Interacts with activin A/INHBA. Mg(2+) is required as a cofactor. It depends on Mn(2+) as a cofactor.

It is found in the cell membrane. It catalyses the reaction L-threonyl-[receptor-protein] + ATP = O-phospho-L-threonyl-[receptor-protein] + ADP + H(+). The catalysed reaction is L-seryl-[receptor-protein] + ATP = O-phospho-L-seryl-[receptor-protein] + ADP + H(+). Functionally, on ligand binding, forms a receptor complex consisting of two type II and two type I transmembrane serine/threonine kinases. Type II receptors phosphorylate and activate type I receptors which autophosphorylate, then bind and activate SMAD transcriptional regulators. Receptor for activin A, activin B and inhibin A. Mediates induction of adipogenesis by GDF6. The polypeptide is Activin receptor type-2A (Rattus norvegicus (Rat)).